The sequence spans 327 residues: GMP reductase (327 aa).

Residue C176 is the Thioimidate intermediate of the active site. An NADP(+)-binding site is contributed by 205 to 228 (IIADGGIRTHGDIAKSIRFGASMV).

It belongs to the IMPDH/GMPR family. GuaC type 2 subfamily.

It catalyses the reaction IMP + NH4(+) + NADP(+) = GMP + NADPH + 2 H(+). Functionally, catalyzes the irreversible NADPH-dependent deamination of GMP to IMP. It functions in the conversion of nucleobase, nucleoside and nucleotide derivatives of G to A nucleotides, and in maintaining the intracellular balance of A and G nucleotides. The sequence is that of GMP reductase from Streptococcus pyogenes serotype M28 (strain MGAS6180).